A 450-amino-acid polypeptide reads, in one-letter code: ATP-dependent protease ATPase subunit HslU (450 aa).

Residues V29, 71-76 (GVGKTE), D261, E328, and R400 contribute to the ATP site.

Belongs to the ClpX chaperone family. HslU subfamily. As to quaternary structure, a double ring-shaped homohexamer of HslV is capped on each side by a ring-shaped HslU homohexamer. The assembly of the HslU/HslV complex is dependent on binding of ATP.

It localises to the cytoplasm. Its function is as follows. ATPase subunit of a proteasome-like degradation complex; this subunit has chaperone activity. The binding of ATP and its subsequent hydrolysis by HslU are essential for unfolding of protein substrates subsequently hydrolyzed by HslV. HslU recognizes the N-terminal part of its protein substrates and unfolds these before they are guided to HslV for hydrolysis. The chain is ATP-dependent protease ATPase subunit HslU from Rickettsia africae (strain ESF-5).